The following is a 486-amino-acid chain: Endoglucanase 16 (486 aa).

An N-terminal signal peptide occupies residues 1 to 30 (MANYKGRGNVMIRSMLLGLYGIINIVCVNG). N29 carries N-linked (GlcNAc...) asparagine glycosylation. D87 serves as the catalytic Nucleophile. Residues H407, D458, and E467 contribute to the active site.

Belongs to the glycosyl hydrolase 9 (cellulase E) family.

It localises to the secreted. It catalyses the reaction Endohydrolysis of (1-&gt;4)-beta-D-glucosidic linkages in cellulose, lichenin and cereal beta-D-glucans.. This chain is Endoglucanase 16, found in Arabidopsis thaliana (Mouse-ear cress).